The following is a 156-amino-acid chain: Cyanate hydratase (156 aa).

Catalysis depends on residues Arg-96, Glu-99, and Ser-122.

Belongs to the cyanase family.

The catalysed reaction is cyanate + hydrogencarbonate + 3 H(+) = NH4(+) + 2 CO2. Catalyzes the reaction of cyanate with bicarbonate to produce ammonia and carbon dioxide. The polypeptide is Cyanate hydratase (Burkholderia cenocepacia (strain ATCC BAA-245 / DSM 16553 / LMG 16656 / NCTC 13227 / J2315 / CF5610) (Burkholderia cepacia (strain J2315))).